The chain runs to 397 residues: Succinate--CoA ligase [ADP-forming] subunit beta (397 aa).

An ATP-grasp domain is found at 9–254; the sequence is KALLKGYGAP…ETEEDAKEIE (246 aa). Residues K46, 53-55, E109, A112, and E117 each bind ATP; that span reads GRG. Positions 209 and 223 each coordinate Mg(2+). Residues N274 and 331-333 contribute to the substrate site; that span reads GIM.

Belongs to the succinate/malate CoA ligase beta subunit family. In terms of assembly, heterotetramer of two alpha and two beta subunits. It depends on Mg(2+) as a cofactor.

It carries out the reaction succinate + ATP + CoA = succinyl-CoA + ADP + phosphate. It catalyses the reaction GTP + succinate + CoA = succinyl-CoA + GDP + phosphate. The protein operates within carbohydrate metabolism; tricarboxylic acid cycle; succinate from succinyl-CoA (ligase route): step 1/1. Succinyl-CoA synthetase functions in the citric acid cycle (TCA), coupling the hydrolysis of succinyl-CoA to the synthesis of either ATP or GTP and thus represents the only step of substrate-level phosphorylation in the TCA. The beta subunit provides nucleotide specificity of the enzyme and binds the substrate succinate, while the binding sites for coenzyme A and phosphate are found in the alpha subunit. The chain is Succinate--CoA ligase [ADP-forming] subunit beta from Rhizobium etli (strain CIAT 652).